Consider the following 495-residue polypeptide: MKSQLLSLAVAVSTISQGVVGQEPFGWPFKPMVTQDDLQNKIKLKDIMAGIEKLQSFSDAHPEKNRVFGGNGHKDTVEWIYNELKATGYYNVKKQEQVHLWSHAEAALSANGKDLKASAMSYSPPANKIMAELVVAKNNGCNATDYPENTQGKIVLIQRGVCSFGEKSSQAGDAKAIGAVVYNNVPGSLAGTLGGLDKRHVPTAGLSQEDGKNLASLVASGKVDVTMNVVSLFENRTTWNVIAETKGGDHNNVVMLGAHSDSVDAGPGINDNGSGSIGIMTVAKALTNFKLNNAVRFAWWTAEEFGLLGSTFYVDSLDDRELHKVKLYLNFDMIGSPNFANQIYDGDGSAYNMTGPAGSAEIEYLFEKFFDDQGLPHQPTAFTGRSDYSAFIKRNVPAGGLFTGAEVVKTPEQVKLFGGEAGVAYDKNYHGKGDTVANINKGAIFLNTRAIAYSVAEYARSLKGFPTRPKTGKRAVNPQYAKMPGGGCGHHTVFM.

A signal peptide spans 1–21; that stretch reads MKSQLLSLAVAVSTISQGVVG. In terms of domain architecture, PA spans 124-218; that stretch reads PPANKIMAEL…EDGKNLASLV (95 aa). N-linked (GlcNAc...) asparagine glycans are attached at residues asparagine 142 and asparagine 235. Zn(2+) contacts are provided by histidine 259 and aspartate 271. Asparagine 272 is a glycosylation site (N-linked (GlcNAc...) asparagine). Residue glutamate 303 is the Proton acceptor of the active site. Glutamate 304 and aspartate 332 together coordinate Zn(2+). Asparagine 352 carries an N-linked (GlcNAc...) asparagine glycan. Histidine 430 serves as a coordination point for Zn(2+).

Belongs to the peptidase M28 family. M28A subfamily. In terms of assembly, monomer. It depends on Zn(2+) as a cofactor.

The protein resides in the secreted. In terms of biological role, extracellular aminopeptidase that releases a wide variety of amino acids from natural peptides and contributes to pathogenicity. The polypeptide is Leucine aminopeptidase 2 (LAP2) (Trichophyton tonsurans (Scalp ringworm fungus)).